Here is a 673-residue protein sequence, read N- to C-terminus: DNA topoisomerase 1 (673 aa).

The region spanning 1 to 134 (MVAEKPKAAA…ARRMKFSTLA (134 aa)) is the Toprim domain. Residues Glu4 and Asp103 each coordinate Mg(2+). Positions 149 to 568 (DVEMIEAGMA…MSKKTISKLL (420 aa)) constitute a Topo IA-type catalytic domain. The tract at residues 189 to 194 (SAGRVQ) is interaction with DNA. Catalysis depends on Tyr311, which acts as the O-(5'-phospho-DNA)-tyrosine intermediate. The interval 352–374 (LRPVQGSKDDPAHPAIHPTGEKP) is disordered. Residues 595–615 (CHLCGRKAVSAVSGYRLCSHH) form a C4-type zinc finger.

It belongs to the type IA topoisomerase family. As to quaternary structure, monomer. Requires Mg(2+) as cofactor.

It catalyses the reaction ATP-independent breakage of single-stranded DNA, followed by passage and rejoining.. Functionally, releases the supercoiling and torsional tension of DNA, which is introduced during the DNA replication and transcription, by transiently cleaving and rejoining one strand of the DNA duplex. Introduces a single-strand break via transesterification at a target site in duplex DNA. The scissile phosphodiester is attacked by the catalytic tyrosine of the enzyme, resulting in the formation of a DNA-(5'-phosphotyrosyl)-enzyme intermediate and the expulsion of a 3'-OH DNA strand. The free DNA strand then undergoes passage around the unbroken strand, thus removing DNA supercoils. Finally, in the religation step, the DNA 3'-OH attacks the covalent intermediate to expel the active-site tyrosine and restore the DNA phosphodiester backbone. The chain is DNA topoisomerase 1 from Aeropyrum pernix (strain ATCC 700893 / DSM 11879 / JCM 9820 / NBRC 100138 / K1).